The primary structure comprises 405 residues: Exodeoxyribonuclease 7 large subunit (405 aa).

Belongs to the XseA family. As to quaternary structure, heterooligomer composed of large and small subunits.

It is found in the cytoplasm. The enzyme catalyses Exonucleolytic cleavage in either 5'- to 3'- or 3'- to 5'-direction to yield nucleoside 5'-phosphates.. Bidirectionally degrades single-stranded DNA into large acid-insoluble oligonucleotides, which are then degraded further into small acid-soluble oligonucleotides. The polypeptide is Exodeoxyribonuclease 7 large subunit (Halothermothrix orenii (strain H 168 / OCM 544 / DSM 9562)).